Consider the following 144-residue polypeptide: Small ribosomal subunit protein uS11c (144 aa).

It belongs to the universal ribosomal protein uS11 family. As to quaternary structure, part of the 30S ribosomal subunit.

It is found in the plastid. The protein localises to the chloroplast. The polypeptide is Small ribosomal subunit protein uS11c (Oenothera biennis (German evening primrose)).